Here is a 274-residue protein sequence, read N- to C-terminus: MQFAKMHGLGNDFMVVDAVTQNVYFSPELIRRLADRHCGVGFDQLLVVEPPYDPELDFHYRIFNADGSEVAQCGNGARCFARFVRLKGLTNKRDIAVSTQTGRMVLSVTDDELVRVNMGEPNFEPQQVPFRAVKAEKTYIMRADEHTVLCGVVSMGNPHCVIQVEDVETAKVETLGPLLESHERFPDRANIGFMQVVDSQTVRLRVYERGAGETQACGSGACAAVAVGILQGLLSAKVRVSLPGGELDIQWDGPGHPLFMTGPATHVYDGFIHL.

Residues Asn-11, Gln-44, and Asn-64 each coordinate substrate. Cys-73 acts as the Proton donor in catalysis. Substrate is bound by residues 74 to 75 (GN), Asn-157, Asn-190, and 208 to 209 (ER). Cys-217 functions as the Proton acceptor in the catalytic mechanism. 218-219 (GS) contacts substrate.

Belongs to the diaminopimelate epimerase family. In terms of assembly, homodimer.

It localises to the cytoplasm. The enzyme catalyses (2S,6S)-2,6-diaminopimelate = meso-2,6-diaminopimelate. Its pathway is amino-acid biosynthesis; L-lysine biosynthesis via DAP pathway; DL-2,6-diaminopimelate from LL-2,6-diaminopimelate: step 1/1. In terms of biological role, catalyzes the stereoinversion of LL-2,6-diaminopimelate (L,L-DAP) to meso-diaminopimelate (meso-DAP), a precursor of L-lysine and an essential component of the bacterial peptidoglycan. The chain is Diaminopimelate epimerase from Pectobacterium atrosepticum (strain SCRI 1043 / ATCC BAA-672) (Erwinia carotovora subsp. atroseptica).